The chain runs to 124 residues: CLAVATA3/ESR (CLE)-related protein 45 (124 aa).

The signal sequence occupies residues 1–20 (MLGSSTRSMFFLLVCIGLLA). N-linked (GlcNAc...) asparagine glycosylation is found at Asn-25 and Asn-96. The stretch at 71 to 109 (LNKNRRVLEEVNKDKIKAEETQERKNKTEDSFKSSKRRV) forms a coiled coil. The span at 87 to 103 (KAEETQERKNKTEDSFK) shows a compositional bias: basic and acidic residues. Residues 87–124 (KAEETQERKNKTEDSFKSSKRRVRRGSDPIHNKAQPFS) form a disordered region.

The protein belongs to the CLV3/ESR signal peptide family. In terms of assembly, binds to SKM1 present in the pollen grain, particularly under relatively high temperature (at 30 degrees Celsius). Interacts with BAM3, especially in roots. In terms of tissue distribution, expressed at low levels in flowers, especially in pistils. Present in vascular tissues. In roots, confined to protophloem and sieve element precursor cells.

Its subcellular location is the secreted. The protein resides in the extracellular space. Extracellular signal peptide that regulates cell fate. Represses root apical meristem maintenance. Represses protophloem differentiation in a BAM3-dependent manner. BRX, BAM3, and CLE45 act together to regulate the transition of protophloem cells from proliferation to differentiation, thus impinging on postembryonic growth capacity of the root meristem; this signaling pathway requires CRN and CLV2 and involves MAKR5 for its transduction/amplification. Triggers the accumulation of MAKR5 in developing sieve elements in a BAM3-dependent manner. Prevents, in a dose-dependent manner, auxin response in the root meristem thus leading in the repression of protophloem differentiation and periclinal sieve element precursor cell division. Promotes pollen tube growth prolongation in a SKM1 and SKM2-dependent manner, especially under relatively high temperature (at 30 degrees Celsius), thus conferring tolerance against high temperature probably through the maintenance of mitochondrial activity. Alleviates mitochondrial decay pollen tube in vitro culture. This is CLAVATA3/ESR (CLE)-related protein 45 from Arabidopsis thaliana (Mouse-ear cress).